The following is a 247-amino-acid chain: Triosephosphate isomerase (247 aa).

Substrate contacts are provided by Asn-10 and Lys-12. His-95 functions as the Electrophile in the catalytic mechanism. Catalysis depends on Glu-165, which acts as the Proton acceptor.

Belongs to the triosephosphate isomerase family. In terms of assembly, homodimer.

The enzyme catalyses D-glyceraldehyde 3-phosphate = dihydroxyacetone phosphate. It functions in the pathway carbohydrate biosynthesis; gluconeogenesis. Its pathway is carbohydrate degradation; glycolysis; D-glyceraldehyde 3-phosphate from glycerone phosphate: step 1/1. This Yarrowia lipolytica (strain CLIB 122 / E 150) (Yeast) protein is Triosephosphate isomerase (TPI1).